Here is a 383-residue protein sequence, read N- to C-terminus: Gap junction alpha-1 protein (383 aa).

Residues 2 to 23 are Cytoplasmic-facing; it reads GDWSALGKLLDKVQAYSTAGGK. S5 is subject to Phosphoserine. A helical transmembrane segment spans residues 24–44; sequence VWLSVLFIFRILLLGTAVESA. The Extracellular segment spans residues 45–76; sequence WGDEQSAFRCNTQQPGCENVCYDKSFPISHVR. Intrachain disulfides connect C54/C193 and C188/C199. A helical membrane pass occupies residues 77-97; the sequence is FWVLQIIFVSVPTLLYLAHVF. At 98-156 the chain is on the cytoplasmic side; that stretch reads YVMRKEEKLNKKEEELKVVAQTDGANVDMHLKQIEIKKFKYGIEEHGKVKMRGGLLRTY. A Glycyl lysine isopeptide (Lys-Gly) (interchain with G-Cter in SUMO) cross-link involves residue K145. The helical transmembrane segment at 157 to 177 threads the bilayer; the sequence is IISILFKSVFEVAFLLIQWYI. At 178–208 the chain is on the extracellular side; it reads YGFSLSAVYTCKRDPCPHQVDCFLSRPTEKT. Residues 209–229 form a helical membrane-spanning segment; sequence IFIIFMLVVSLVSLALNIIEL. Over 230-383 the chain is Cytoplasmic; the sequence is FYVFFKGVKD…SRPRPDDLEI (154 aa). K238 participates in a covalent cross-link: Glycyl lysine isopeptide (Lys-Gly) (interchain with G-Cter in SUMO). The interaction with NOV stretch occupies residues 245–383; the sequence is SDPYHTTTGP…SRPRPDDLEI (139 aa). Y248 carries the phosphotyrosine modification. Residues S256, S258, and S263 each carry the phosphoserine modification. Positions 265–383 are interaction with UBQLN4; that stretch reads KYAYFNGCSS…SRPRPDDLEI (119 aa). The residue at position 272 (C272) is an S-nitrosocysteine. The residue at position 276 (T276) is a Phosphothreonine. 2 positions are modified to phosphoserine: S307 and S315. Residues 318–333 show a composition bias toward polar residues; sequence QNRMGQAGSTISNSHA. The tract at residues 318-383 is disordered; the sequence is QNRMGQAGST…SRPRPDDLEI (66 aa). Position 326 is a phosphoserine; by CK1 (S326). Residue T327 is modified to Phosphothreonine. Residues S329 and S331 each carry the phosphoserine; by CK1 modification. The span at 339–352 shows a compositional bias: basic and acidic residues; it reads PDDHQNSKKLDAGH. S345 and S366 each carry phosphoserine. The span at 363–375 shows a compositional bias: low complexity; that stretch reads RPSSRASSRASSR. Residue S369 is modified to Phosphoserine; by PKC/PRKCG and PKC/PRKCD. 2 positions are modified to phosphoserine: S370 and S374.

Belongs to the connexin family. Alpha-type (group II) subfamily. A connexon is composed of a hexamer of connexins. Interacts with SGSM3. Interacts with RIC1/CIP150. Interacts with CNST and CSNK1D. Interacts (via C-terminus) with TJP1. Interacts (via C-terminus) with SRC (via SH3 domain). Interacts (not ubiquitinated) with UBQLN4 (via UBA domain). Interacts with NOV. Interacts with TMEM65. Interacts with ANK3/ANKG and PKP2. In terms of processing, phosphorylation at Ser-326, Ser-329 and Ser-331 by CK1 modulates gap junction assembly. Phosphorylated at Ser-369 by PRKCG; phosphorylation induces disassembly of gap junction plaques and inhibition of gap junction activity. Phosphorylation at Ser-369 by PRKCD triggers its internalization into small vesicles leading to proteasome-mediated degradation. Sumoylated with SUMO1, SUMO2 and SUMO3, which may regulate the level of functional Cx43 gap junctions at the plasma membrane. May be desumoylated by SENP1 or SENP2. Post-translationally, acetylated in the developing cortex; leading to delocalization from the cell membrane.

The protein resides in the cell membrane. It is found in the cell junction. The protein localises to the gap junction. It localises to the endoplasmic reticulum. Gap junction protein that acts as a regulator of bladder capacity. A gap junction consists of a cluster of closely packed pairs of transmembrane channels, the connexons, through which materials of low MW diffuse from one cell to a neighboring cell. May play a critical role in the physiology of hearing by participating in the recycling of potassium to the cochlear endolymph. Negative regulator of bladder functional capacity: acts by enhancing intercellular electrical and chemical transmission, thus sensitizing bladder muscles to cholinergic neural stimuli and causing them to contract. May play a role in cell growth inhibition through the regulation of NOV expression and localization. Plays an essential role in gap junction communication in the ventricles. In Bos taurus (Bovine), this protein is Gap junction alpha-1 protein (GJA1).